The chain runs to 832 residues: MAGLRYSVKVYVLNEDEEWNNLGTGQVSSTYDEQFQGMSLLVRSDSDGSVILRSQIPPDRPYGKYQETLIVWYEAENQGLVLKFQDPAGCQDIWKEICQAQGKDPSIQTTVNISDEPEEDFNEMSVISNMVVLPDCELNTLDQIADIVTSVFSSPVTDRERLAEILKNEAYIPKLLQLFHTCENLENTEGLHHLYEIIKGILFLNEACLFEIMFSDECIMDVVGCLEYDPALDQPKRHRDFLTNDAKFKEVIPITNSELRQKIHQTYRLQYIYDILLPVPSIFEDNFLSTLTTFIFSNKAEIVSMLQKDHKFLYEVFAQLKDETTHDDRRCELLFFFKELCSFSQALQPQSKDALFETLIQLGVLPALKIVMIRDDLQVRSAAAVICAYLVEYSPSRIREFIISEAHVCKDSDLFINVIIKQMICDTDPELGGAVHLMVVLHTLLDPRNMLTTPEKSERSEFLHFFYKHCMHKFTAPLLAATSEHNCEEDDIAGYDKSKNCPNDNQTAQLLALILELLTFCIQHHTFYIRSYILNKDLLRKALILMNSKHTHLILCVLRFMRRMICLNDEAYNNYIIKGNLFEPVVNALLDNGTRYNMLNSAILELFEYIRVENIKPLVSHIVEKFYNTLESIEYVQTFKGLKIKYEKERDRQSQIQKNLHSVLQNIVVFRGTIEEIGLEEEICFMEDAGEVVMPPLEDDDEFMETKRTQEGEAVMPPLEDDDKFTETKRTHQEGEAVMPPLEDDDEFMETKRNQEHEGKVDSPKRTSSGDFKFSSSYSACAAIGTGSPSGSSVVRLVDHPDDEEEKEEDEEEKEEDKEDETSPKKKPHLSS.

Residues 708–832 (RTQEGEAVMP…SPKKKPHLSS (125 aa)) form a disordered region. Basic and acidic residues-rich tracts occupy residues 725–735 (FTETKRTHQEG) and 749–765 (METKRNQEHEGKVDSPK). Residues 769-779 (SGDFKFSSSYS) are compositionally biased toward low complexity. Over residues 801-820 (PDDEEEKEEDEEEKEEDKED) the composition is skewed to acidic residues.

The protein belongs to the SMEK family.

The sequence is that of Protein PPP4R3C from Homo sapiens (Human).